Reading from the N-terminus, the 63-residue chain is Protease 2 small chain (63 aa).

The Peptidase S8 domain occupies 11–63 (QWGLSGTYGIRANTAWDNGYQGQGKIIAVVDTGITDHPDLLANRTSPLGYDFI).

This sequence belongs to the peptidase S8 family. Heterodimer of a large and a small chain.

It localises to the secreted. This Achromobacter lyticus protein is Protease 2 small chain.